The chain runs to 519 residues: General transcription factor 3C polypeptide 5 (519 aa).

At Ala-2 the chain carries N-acetylalanine. The interval 465–519 is disordered; sequence ALFSSSAKADGGKEQLTYESGEDEEDEEEEEEEEEDFKPSDGSENEMETEILDYV. Acidic residues-rich tracts occupy residues 484-500 and 507-519; these read SGED…EEED and SENE…LDYV.

This sequence belongs to the TFIIIC subunit 5 family. In terms of assembly, part of the TFIIIC subcomplex TFIIIC2, consisting of six subunits, GTF3C1, GTF3C2, GTF3C3, GTF3C4, GTF3C5 and GTF3C6. Interacts with BRF1, GTF3C6 and TBP.

Its subcellular location is the nucleus. Involved in RNA polymerase III-mediated transcription. Integral, tightly associated component of the DNA-binding TFIIIC2 subcomplex that directly binds tRNA and virus-associated RNA promoters. The protein is General transcription factor 3C polypeptide 5 (GTF3C5) of Homo sapiens (Human).